Consider the following 69-residue polypeptide: Brevinin-1CG5 (69 aa).

Positions 1-22 (MFTLKKSLLLLFFLGTINLSLC) are cleaved as a signal peptide. The propeptide at 23–43 (EQERNAEEERRDDDEMDVEVE) is removed in mature form. The cysteines at positions 63 and 69 are disulfide-linked.

It belongs to the frog skin active peptide (FSAP) family. Brevinin subfamily. As to expression, expressed by the skin glands.

It is found in the secreted. Antimicrobial peptide active against a variety of Gram-positive and Gram-negative bacterial strains. Has antifungal activity against C.albicans ATCC 10231 and a slime mold isolate. Has hemolytic activity against human erythrocytes. This chain is Brevinin-1CG5, found in Amolops chunganensis (Chungan torrent frog).